The primary structure comprises 190 residues: dITP/XTP pyrophosphatase (190 aa).

7 to 12 (THNPNK) contributes to the substrate binding site. Mg(2+) is bound by residues Glu-39 and Asp-68. Asp-68 serves as the catalytic Proton acceptor. Substrate is bound by residues Thr-69, 148–151 (FGYD), Lys-171, and 176–177 (HR).

It belongs to the HAM1 NTPase family. In terms of assembly, homodimer. It depends on Mg(2+) as a cofactor.

The catalysed reaction is XTP + H2O = XMP + diphosphate + H(+). It carries out the reaction dITP + H2O = dIMP + diphosphate + H(+). The enzyme catalyses ITP + H2O = IMP + diphosphate + H(+). In terms of biological role, pyrophosphatase that catalyzes the hydrolysis of nucleoside triphosphates to their monophosphate derivatives, with a high preference for the non-canonical purine nucleotides XTP (xanthosine triphosphate), dITP (deoxyinosine triphosphate) and ITP. Seems to function as a house-cleaning enzyme that removes non-canonical purine nucleotides from the nucleotide pool, thus preventing their incorporation into DNA/RNA and avoiding chromosomal lesions. This chain is dITP/XTP pyrophosphatase, found in Christiangramia forsetii (strain DSM 17595 / CGMCC 1.15422 / KT0803) (Gramella forsetii).